Here is a 118-residue protein sequence, read N- to C-terminus: Alpha-amylase inhibitor 4 (118 aa).

Cystine bridges form between cysteine 7–cysteine 60, cysteine 21–cysteine 49, cysteine 30–cysteine 82, and cysteine 50–cysteine 101.

The protein belongs to the protease inhibitor I6 (cereal trypsin/alpha-amylase inhibitor) family.

The protein resides in the secreted. In terms of biological role, alpha-amylase inhibitor. This chain is Alpha-amylase inhibitor 4, found in Sorghum bicolor (Sorghum).